A 243-amino-acid polypeptide reads, in one-letter code: Probable fructoselysine utilization operon transcriptional repressor (243 aa).

The HTH gntR-type domain maps to 10 to 78 (QLLYATVRQR…QGKGTFVQSQ (69 aa)). The H-T-H motif DNA-binding region spans 38-57 (ENELCTQYNVSRITIRKAIS).

It participates in carbohydrate metabolism; fructoselysine degradation [regulation]. Its function is as follows. May regulate the transcription of the frlABCDR operon, involved in the utilization of fructoselysine and psicoselysine. The polypeptide is Probable fructoselysine utilization operon transcriptional repressor (Escherichia coli (strain K12)).